Reading from the N-terminus, the 200-residue chain is Holliday junction branch migration complex subunit RuvA (200 aa).

Positions Met-1 to His-64 are domain I. A domain II region spans residues Asn-65 to Pro-143. Residues Ser-133–Gln-152 form a disordered region. The segment at Glu-144–Ser-148 is flexible linker. Positions Ser-149 to Thr-200 are domain III.

The protein belongs to the RuvA family. Homotetramer. Forms an RuvA(8)-RuvB(12)-Holliday junction (HJ) complex. HJ DNA is sandwiched between 2 RuvA tetramers; dsDNA enters through RuvA and exits via RuvB. An RuvB hexamer assembles on each DNA strand where it exits the tetramer. Each RuvB hexamer is contacted by two RuvA subunits (via domain III) on 2 adjacent RuvB subunits; this complex drives branch migration. In the full resolvosome a probable DNA-RuvA(4)-RuvB(12)-RuvC(2) complex forms which resolves the HJ.

It localises to the cytoplasm. Its function is as follows. The RuvA-RuvB-RuvC complex processes Holliday junction (HJ) DNA during genetic recombination and DNA repair, while the RuvA-RuvB complex plays an important role in the rescue of blocked DNA replication forks via replication fork reversal (RFR). RuvA specifically binds to HJ cruciform DNA, conferring on it an open structure. The RuvB hexamer acts as an ATP-dependent pump, pulling dsDNA into and through the RuvAB complex. HJ branch migration allows RuvC to scan DNA until it finds its consensus sequence, where it cleaves and resolves the cruciform DNA. The sequence is that of Holliday junction branch migration complex subunit RuvA from Coxiella burnetii (strain Dugway 5J108-111).